A 555-amino-acid polypeptide reads, in one-letter code: La-related protein 7 (555 aa).

The region spanning 36 to 127 (RSRVKQLLSD…RRKEPLGETP (92 aa)) is the HTH La-type RNA-binding domain. Residues 133 to 211 (RTVYVELLPK…PRKPGIFPKT (79 aa)) form the RRM domain. The disordered stretch occupies residues 218–327 (PFDAVTQDND…ENKDEELNSL (110 aa)). 3 stretches are compositionally biased toward polar residues: residues 238-251 (KNSTSEETGSNNMD), 258-274 (STVTSEPNLATLTSTVS), and 284-293 (SQSFEASSGE). A coiled-coil region spans residues 295–356 (QFEMSSKMRK…ERLKVGEEVI (62 aa)). A compositionally biased stretch (basic and acidic residues) spans 303–327 (RKVEEEKSELKDLSSENKDEELNSL). The 114-residue stretch at 425-538 (EFLSGVIVKI…TEKLISKAEK (114 aa)) folds into the xRRM domain.

This sequence belongs to the LARP7 family. As to quaternary structure, core component of the 7SK RNP complex. Associates with box C/D small nucleolar ribonucleoprotein (snoRNP) complexes.

It is found in the nucleus. The protein localises to the nucleoplasm. RNA-binding protein that specifically binds distinct small nuclear RNA (snRNAs) and regulates their processing and function. Specifically binds the 7SK snRNA (7SK RNA) and acts as a core component of the 7SK ribonucleoprotein (RNP) complex, thereby acting as a negative regulator of transcription elongation by RNA polymerase II. The 7SK RNP complex sequesters the positive transcription elongation factor b (P-TEFb) in a large inactive 7SK RNP complex preventing RNA polymerase II phosphorylation and subsequent transcriptional elongation. The 7SK RNP complex also promotes snRNA gene transcription by RNA polymerase II via interaction with the little elongation complex (LEC). LARP7 specifically binds to the highly conserved 3'-terminal U-rich stretch of 7SK RNA; on stimulation, remains associated with 7SK RNA, whereas P-TEFb is released from the complex. LARP7 also acts as a regulator of mRNA splicing fidelity by promoting U6 snRNA processing. Specifically binds U6 snRNAs and associates with a subset of box C/D RNP complexes: promotes U6 snRNA 2'-O-methylation by facilitating U6 snRNA loading into box C/D RNP complexes. U6 snRNA 2'-O-methylation is required for mRNA splicing fidelity. The chain is La-related protein 7 from Danio rerio (Zebrafish).